A 593-amino-acid chain; its full sequence is UvrABC system protein C (593 aa).

The GIY-YIG domain maps to 17-94; that stretch reads MEPGCYLMKD…IKQYQPRYNI (78 aa). Residues 199–234 form the UVR domain; the sequence is KTILKSLEERMLTASESLDFERAKEYRDLIQHIQNL.

The protein belongs to the UvrC family. As to quaternary structure, interacts with UvrB in an incision complex.

Its subcellular location is the cytoplasm. Functionally, the UvrABC repair system catalyzes the recognition and processing of DNA lesions. UvrC both incises the 5' and 3' sides of the lesion. The N-terminal half is responsible for the 3' incision and the C-terminal half is responsible for the 5' incision. The protein is UvrABC system protein C of Staphylococcus aureus (strain Mu3 / ATCC 700698).